We begin with the raw amino-acid sequence, 100 residues long: Urease subunit gamma (100 aa).

The protein belongs to the urease gamma subunit family. As to quaternary structure, heterotrimer of UreA (gamma), UreB (beta) and UreC (alpha) subunits. Three heterotrimers associate to form the active enzyme.

Its subcellular location is the cytoplasm. The enzyme catalyses urea + 2 H2O + H(+) = hydrogencarbonate + 2 NH4(+). It participates in nitrogen metabolism; urea degradation; CO(2) and NH(3) from urea (urease route): step 1/1. This Pseudomonas aeruginosa (strain UCBPP-PA14) protein is Urease subunit gamma.